Here is a 285-residue protein sequence, read N- to C-terminus: tRNA uridine(34) hydroxylase (285 aa).

The Rhodanese domain occupies 130–225 (RGDDVVFFDG…YGEAFGDTGL (96 aa)). The active-site Cysteine persulfide intermediate is the Cys185.

Belongs to the TrhO family.

The enzyme catalyses uridine(34) in tRNA + AH2 + O2 = 5-hydroxyuridine(34) in tRNA + A + H2O. In terms of biological role, catalyzes oxygen-dependent 5-hydroxyuridine (ho5U) modification at position 34 in tRNAs. This is tRNA uridine(34) hydroxylase from Rhodococcus opacus (strain B4).